We begin with the raw amino-acid sequence, 395 residues long: MNADWLHAIEEKLTRLKDRGSFRQLVPTSEAALPWLTRENCRLLNLASNNYLGIADSKEFIERTEQLASSYAIGSTASRLIIGNHPLYEEAEYELTKWKKTEAALIFGSGYMANVGIISSIVGRGDAVFSDKLNHASIVDGCQLSRADHLRFRHNDMDHLETLLQKSPHKQKLIVVDALFSMDGDHANLHDLVTLKERYGAILMVDEAHSGGVYGATGGGLVEELGLNDRVDIQMGTFSKALGSYGGYVAGAKPFIEYLLNHARSLIFTTALPPYIVASHLAALQIVQEQPWRREKVQVLGERLRNGLEQLGFSLCGSESYIVPVLIGDNHDLLLVSESLQAAGIAAIPVRPPTVPRGEGRIRLTVTASHTEKDIDWAIEQFQRLPLVGRRELTP.

Arg-23 provides a ligand contact to substrate. 110–111 (GY) serves as a coordination point for pyridoxal 5'-phosphate. Position 135 (His-135) interacts with substrate. Pyridoxal 5'-phosphate contacts are provided by residues Ser-181, 206–209 (DEAH), and 237–240 (TFSK). An N6-(pyridoxal phosphate)lysine modification is found at Lys-240. Thr-354 lines the substrate pocket.

This sequence belongs to the class-II pyridoxal-phosphate-dependent aminotransferase family. BioF subfamily. In terms of assembly, homodimer. Requires pyridoxal 5'-phosphate as cofactor.

It catalyses the reaction 6-carboxyhexanoyl-[ACP] + L-alanine + H(+) = (8S)-8-amino-7-oxononanoate + holo-[ACP] + CO2. It functions in the pathway cofactor biosynthesis; biotin biosynthesis. Catalyzes the decarboxylative condensation of pimeloyl-[acyl-carrier protein] and L-alanine to produce 8-amino-7-oxononanoate (AON), [acyl-carrier protein], and carbon dioxide. This is Putative 8-amino-7-oxononanoate synthase (bioF) from Halalkalibacterium halodurans (strain ATCC BAA-125 / DSM 18197 / FERM 7344 / JCM 9153 / C-125) (Bacillus halodurans).